Consider the following 241-residue polypeptide: Terpene cyclase pyr4 (241 aa).

The next 7 helical transmembrane spans lie at 20–40, 49–69, 79–99, 113–133, 141–161, 168–188, and 206–226; these read IADWALLAQGLGWSINYLAMI, YGMAILPLCCNFAWEFVYSVI, AVLTTWMILNLFVMYTAIKFA, LPWIFPVAIAAFTAGHLALAA, ANWGAFLCFELLTSGAVCQLM, GASYTIWLSRFLGSYIGGIFL, and FVTWHGLMCFSLDIAYVTFLW.

Belongs to the paxB family.

It localises to the membrane. The enzyme catalyses 2-oxo-3-[(8S)-epoxy-(2E,6E)-farnesyl]-6-(pyridin-3-yl)-2H-pyran-4-olate + H(+) = deacetylpyripyropene E. It functions in the pathway secondary metabolite biosynthesis; terpenoid biosynthesis. Functionally, terpene cyclase; part of the gene cluster that mediates the biosynthesis of pyripyropene A, a specific human acyl-coenzyme A:cholesterol acyltransferase 2 inhibitor. The first step of the pathway is the synthesis of nicotinyl-CoA from nicotinic acid by the nicotinic acid-CoA ligase pyr1. Nicotinyl-CoA is then a substrate of polyketide synthase pyr2 to produce 4-hydroxy-6-(3-pyridinyl)-2H-pyran-2-one (HPPO) which is further prenylated by the polyprenyl transferase pyr6 to yield farnesyl-HPPO. The next steps consist of an epoxidation of farnesyl-HPPO to epoxyfarnesyl-HPPO by FAD-dependent monooxygenase pyr5 and a cyclization of the terpenoid portion by the terpene cyclase pyr4 to yield deacetyl-pyripyropene E. The 2 cytochrome P450 monooxygenases pyr3 and pyr9, and the 2 acetyltransferases pyr7 and pyr8 are involved in the conversion of deacetyl-pyripyropene E into pyripyropene A through several cycles of oxidation and acetylation steps. Pyr7 acetylates deacetyl-pyripyropene E to pyripyropene E which is oxidized to 11-deacetyl-pyripyropene O by pyr3, which is in turn acetylated into pyripyropene O by pyr8. Pyripyropene O is then oxidized to deacetyl-pyripyropene A by pyr9. Deacetyl-pyripyropene A is finally acetylated to pyripyropene A by pyr8. In Aspergillus fumigatus (strain ATCC MYA-4609 / CBS 101355 / FGSC A1100 / Af293) (Neosartorya fumigata), this protein is Terpene cyclase pyr4.